Reading from the N-terminus, the 265-residue chain is MTKIGKKIRIERIINRESRNTVIVPMDHGVSMGPIEGLKNLAETVNAVAEGGANAVVLHKGVVGFGHRGYGKDVGLIIHLSASTSLAPDPNEKVLVCTVEEAIKLGADAVSVHVNVGSKTEAYQLRKLGEISKIAGEWGMPLLAMMYPRGDGINQFDEKAVALAARVGAELGADIIKTNFTGDVESFRRVVDGCPVPVVVAGGPKMGSDEDILRMVRMAMDAGARGVAIGRNIFQANNPTKMTRAISMIVHDNADVSEALEFLKS.

The Proton acceptor role is filled by Asp27. 1-deoxy-D-threo-hexo-2,5-diulose 6-phosphate is bound by residues 27–31 and 147–149; these read DHGVS and YPR. Tyr147 acts as the Proton donor in catalysis. Lys177 serves as the catalytic Schiff-base intermediate with substrate. Residues 202–203 and 230–231 contribute to the 1-deoxy-D-threo-hexo-2,5-diulose 6-phosphate site; these read GG and GR.

This sequence belongs to the DeoC/FbaB aldolase family. ADHS subfamily. In terms of assembly, homodecamer.

The catalysed reaction is 1-deoxy-D-threo-hexo-2,5-diulose 6-phosphate + L-aspartate 4-semialdehyde = 2,3-dioxopropyl phosphate + 2-amino-2,3,7-trideoxy-D-lyxo-hept-6-ulosonate. Functionally, catalyzes a transaldol reaction between 6-deoxy-5-ketofructose 1-phosphate (DKFP) and L-aspartate semialdehyde (ASA) with an elimination of hydroxypyruvaldehyde phosphate to yield 2-amino-3,7-dideoxy-D-threo-hept-6-ulosonate (ADH). Plays a key role in an alternative pathway of the biosynthesis of 3-dehydroquinate (DHQ), which is involved in the canonical pathway for the biosynthesis of aromatic amino acids. This chain is Putative 2-amino-3,7-dideoxy-D-threo-hept-6-ulosonate synthase 2, found in Archaeoglobus fulgidus (strain ATCC 49558 / DSM 4304 / JCM 9628 / NBRC 100126 / VC-16).